The sequence spans 1052 residues: Membrane-bound transcription factor site-1 protease (1052 aa).

The N-terminal stretch at 1–17 is a signal peptide; that stretch reads MKLVNIWLLLLVVLLCG. The propeptide occupies 18–186; the sequence is KKHLGDRLEK…TGRHSSRRLL (169 aa). Ser168 is subject to Phosphoserine; by FAM20C. Residues 187–998 are Lumenal-facing; it reads RAIPRQVAQT…IMPGRYNQEV (812 aa). Residues 190-472 form the Peptidase S8 domain; sequence PRQVAQTLQA…HGKLDLLRAY (283 aa). Asp218 functions as the Charge relay system in the catalytic mechanism. Asn236 carries N-linked (GlcNAc...) asparagine glycosylation. His249 functions as the Charge relay system in the catalytic mechanism. The N-linked (GlcNAc...) asparagine glycan is linked to Asn305. Catalysis depends on Ser414, which acts as the Charge relay system. 2 N-linked (GlcNAc...) asparagine glycosylation sites follow: Asn515 and Asn728. The segment covering 877–887 has biased composition (polar residues); it reads PSLSHSGNRQR. The tract at residues 877-899 is disordered; sequence PSLSHSGNRQRPPSGAGSVTPER. Asn939 is a glycosylation site (N-linked (GlcNAc...) asparagine). Residues 999-1021 traverse the membrane as a helical segment; it reads GQTIPVFAFLGAMVVLAFFVVQI. At 1022–1052 the chain is on the cytoplasmic side; sequence NKAKSRPKRRKPRVKRPQLMQQVHPPKTPSV. Basic residues predominate over residues 1027–1037; sequence RPKRRKPRVKR. The tract at residues 1027-1052 is disordered; that stretch reads RPKRRKPRVKRPQLMQQVHPPKTPSV.

The protein belongs to the peptidase S8 family. Interacts with LYSET; this interaction bridges GNPTAB to MBTPS1. It depends on Ca(2+) as a cofactor. In terms of processing, the 148 kDa zymogen is processed progressively into two membrane-bound 120 and 106 kDa forms in the endoplasmic reticulum, and late into a secreted 98 kDa form. The propeptide is autocatalytically removed through an intramolecular cleavage after Leu-186. Further cleavage generates 14, 10, and 8 kDa intermediates. In terms of tissue distribution, widely expressed.

The protein resides in the endoplasmic reticulum membrane. Its subcellular location is the golgi apparatus membrane. It catalyses the reaction Processes precursors containing basic and hydrophobic/aliphatic residues at P4 and P2, respectively, with a relatively relaxed acceptance of amino acids at P1 and P3.. With respect to regulation, inhibited by divalent copper and zinc ions, but not by nickel or cobalt. Inhibited by its prosegment, but not smaller fragments. Inhibited by 4-(2-aminoethyl)benzenesulfonyl fluoride (AEBSF), a serine protease inhibitor. In terms of biological role, serine protease that cleaves after hydrophobic or small residues, provided that Arg or Lys is in position P4: known substrates include SREBF1/SREBP1, SREBF2/SREBP2, BDNF, GNPTAB, ATF6, ATF6B and FAM20C. Cleaves substrates after Arg-Ser-Val-Leu (SREBP2), Arg-His-Leu-Leu (ATF6), Arg-Gly-Leu-Thr (BDNF) and its own propeptide after Arg-Arg-Leu-Leu. Catalyzes the first step in the proteolytic activation of the sterol regulatory element-binding proteins (SREBPs) SREBF1/SREBP1 and SREBF2/SREBP2. Also mediates the first step in the proteolytic activation of the cyclic AMP-dependent transcription factor ATF-6 (ATF6 and ATF6B). Mediates the protein cleavage of GNPTAB into subunit alpha and beta, thereby participating in biogenesis of lysosomes. Cleaves the propeptide from FAM20C which is required for FAM20C secretion from the Golgi apparatus membrane and for enhancement of FAM20C kinase activity, promoting osteoblast differentiation and biomineralization. Involved in the regulation of M6P-dependent Golgi-to-lysosome trafficking of lysosomal enzymes. It is required for the activation of CREB3L2/BBF2H7, a transcriptional activator of MIA3/TANGO and other genes controlling mega vesicle formation. Therefore, it plays a key role in the regulation of mega vesicle-mediated collagen trafficking. In astrocytes and osteoblasts, upon DNA damage and ER stress, mediates the first step of the regulated intramembrane proteolytic activation of the transcription factor CREB3L1, leading to the inhibition of cell-cycle progression. The sequence is that of Membrane-bound transcription factor site-1 protease from Homo sapiens (Human).